Reading from the N-terminus, the 317-residue chain is Small ribosomal subunit protein RACK1 (317 aa).

WD repeat units follow at residues 13–44, 61–91, 103–133, 146–178, 190–220, 231–260, and 281–311; these read GHSG…IMWK, GHSH…RLWD, GHTK…KLWN, GHTE…KVWN, GHTG…MLWD, DSGD…KIWD, and AEPP…RVWQ.

It belongs to the WD repeat G protein beta family. Ribosomal protein RACK1 subfamily.

It localises to the cytoplasm. Functionally, involved in the recruitment, assembly and/or regulation of a variety of signaling molecules. Interacts with a wide variety of proteins and plays a role in many cellular processes. Required for VANGL2 membrane localization, inhibits Wnt signaling and regulates cellular polarization and oriented cell division during gastrulation. This chain is Small ribosomal subunit protein RACK1 (gnb2l1), found in Oreochromis niloticus (Nile tilapia).